A 217-amino-acid chain; its full sequence is Monomethylamine corrinoid protein 2 (217 aa).

Positions Met1 to Glu91 constitute a B12-binding N-terminal domain. The B12-binding domain occupies Thr93–Lys217. His106 is a methylcob(III)alamin binding site.

It belongs to the methylamine corrinoid protein family. As to quaternary structure, can form a complex with MtmB.

It participates in one-carbon metabolism; methanogenesis from methylamine. In terms of biological role, acts as a methyl group carrier between MtmB and MtbA. This chain is Monomethylamine corrinoid protein 2 (mtmC2), found in Methanosarcina acetivorans (strain ATCC 35395 / DSM 2834 / JCM 12185 / C2A).